Consider the following 215-residue polypeptide: 3-demethoxyubiquinol 3-hydroxylase (215 aa).

Residues E64, E94, H97, E146, E178, and H181 each contribute to the Fe cation site.

It belongs to the COQ7 family. It depends on Fe cation as a cofactor.

It is found in the cell membrane. It catalyses the reaction a 5-methoxy-2-methyl-3-(all-trans-polyprenyl)benzene-1,4-diol + AH2 + O2 = a 3-demethylubiquinol + A + H2O. It functions in the pathway cofactor biosynthesis; ubiquinone biosynthesis. Functionally, catalyzes the hydroxylation of 2-nonaprenyl-3-methyl-6-methoxy-1,4-benzoquinol during ubiquinone biosynthesis. The protein is 3-demethoxyubiquinol 3-hydroxylase of Pseudomonas putida (strain GB-1).